Reading from the N-terminus, the 654-residue chain is tRNA 5-methylaminomethyl-2-thiouridine biosynthesis bifunctional protein MnmC (654 aa).

The tRNA (mnm(5)s(2)U34)-methyltransferase stretch occupies residues 1-236; the sequence is MTDRIVPATL…KRAMLVGEFA (236 aa). The interval 260–654 is FAD-dependent cmnm(5)s(2)U34 oxidoreductase; the sequence is IGAGLAGCAA…IRALRRGRVA (395 aa).

This sequence in the N-terminal section; belongs to the methyltransferase superfamily. tRNA (mnm(5)s(2)U34)-methyltransferase family. It in the C-terminal section; belongs to the DAO family. FAD is required as a cofactor.

Its subcellular location is the cytoplasm. It catalyses the reaction 5-aminomethyl-2-thiouridine(34) in tRNA + S-adenosyl-L-methionine = 5-methylaminomethyl-2-thiouridine(34) in tRNA + S-adenosyl-L-homocysteine + H(+). Catalyzes the last two steps in the biosynthesis of 5-methylaminomethyl-2-thiouridine (mnm(5)s(2)U) at the wobble position (U34) in tRNA. Catalyzes the FAD-dependent demodification of cmnm(5)s(2)U34 to nm(5)s(2)U34, followed by the transfer of a methyl group from S-adenosyl-L-methionine to nm(5)s(2)U34, to form mnm(5)s(2)U34. This is tRNA 5-methylaminomethyl-2-thiouridine biosynthesis bifunctional protein MnmC from Burkholderia thailandensis (strain ATCC 700388 / DSM 13276 / CCUG 48851 / CIP 106301 / E264).